We begin with the raw amino-acid sequence, 344 residues long: Outer membrane protein assembly factor BamC (344 aa).

Positions 1–24 (MAYSVQKSRLAKVAGVSLVLLLAA) are cleaved as a signal peptide. A lipid anchor (N-palmitoyl cysteine) is attached at Cys25. Residue Cys25 is the site of S-diacylglycerol cysteine attachment.

The protein belongs to the BamC family. In terms of assembly, part of the Bam complex, which is composed of the outer membrane protein BamA, and four lipoproteins BamB, BamC, BamD and BamE. Forms a subcomplex with BamD and BamE. The Bam complex has the shape of a hat, with the BamA beta-barrel crown in the outer membrane and the periplasmic brim formed by the BamA POTRA domains and the 4 lipoproteins.

It localises to the cell outer membrane. Functionally, part of the outer membrane protein assembly complex (Bam), which is involved in assembly and insertion of beta-barrel proteins into the outer membrane. Nonessential member of the complex that stabilizes the interaction between the essential proteins BamA and BamD. Efficient substrate folding and insertion into the outer membrane requires all 5 subunits. A lateral gate may open between the first and last strands of the BamA beta-barrel that allows substrate to insert into the outer membrane; comparison of the structures of complete and nearly complete Bam complexes show there is considerable movement of all 5 proteins. This Escherichia coli (strain K12) protein is Outer membrane protein assembly factor BamC.